A 309-amino-acid chain; its full sequence is Ornithine carbamoyltransferase (309 aa).

Carbamoyl phosphate-binding positions include 51-54, Q78, R102, and 129-132; these read STRT and HPCQ. L-ornithine is bound by residues N161, D225, and 229-230; that span reads SM. Carbamoyl phosphate is bound by residues 265 to 266 and R293; that span reads CL.

Belongs to the aspartate/ornithine carbamoyltransferase superfamily. OTCase family.

It localises to the cytoplasm. It catalyses the reaction carbamoyl phosphate + L-ornithine = L-citrulline + phosphate + H(+). Its pathway is amino-acid biosynthesis; L-arginine biosynthesis; L-arginine from L-ornithine and carbamoyl phosphate: step 1/3. In terms of biological role, reversibly catalyzes the transfer of the carbamoyl group from carbamoyl phosphate (CP) to the N(epsilon) atom of ornithine (ORN) to produce L-citrulline. This Mycolicibacterium paratuberculosis (strain ATCC BAA-968 / K-10) (Mycobacterium paratuberculosis) protein is Ornithine carbamoyltransferase.